A 337-amino-acid chain; its full sequence is GDP-fucose transporter, Golgi (337 aa).

Helical transmembrane passes span 13–35 (NKYL…TVFV), 45–67 (VNLG…ICFV), 95–117 (ILPL…SYVT), 121–140 (YYIG…YVIL), 145–163 (SFKC…WLGV), 173–192 (SWRG…MFSI), 205–227 (VWLL…IIIN), and 242–264 (SWFW…VTAL).

Belongs to the TPT transporter family. SLC35C subfamily.

It localises to the golgi apparatus membrane. Involved in GDP-fucose import from the cytoplasm into the Golgi lumen. Plays a major role in the fucosylation of N-glycans. Functions redundantly with Efr in the O-fucosylation of Notch, positively regulating Notch signaling. The sequence is that of GDP-fucose transporter, Golgi from Drosophila melanogaster (Fruit fly).